Here is a 376-residue protein sequence, read N- to C-terminus: Protein XRP2 (376 aa).

The interval 1 to 55 (MGCFFSKKSRRKSPKKDAALPTGDESATGNDLAETNNTALGSNSNQEAPKQYSWD) is disordered. Gly-2 carries the N-myristoyl glycine lipid modification. Cys-3 carries the S-palmitoyl cysteine lipid modification. Positions 25-48 (ESATGNDLAETNNTALGSNSNQEA) are enriched in polar residues. Residues 49–204 (PKQYSWDKRE…NWSNIHDFTP (156 aa)) enclose the C-CAP/cofactor C-like domain. GTP is bound by residues 123-124 (GS) and 140-143 (QQFR).

Belongs to the TBCC family. Post-translationally, myristoylated on Gly-2; which may be required for membrane targeting. Palmitoylated on Cys-3; which may be required for plasma membrane targeting. As to expression, in the retina, detected in both rod and cone photoreceptors (at protein level). Has strongest expression in the retinal outer nuclear layer (ONL) and weaker expression in the outer plexiform layer (OPL) and inner plexiform layer (IPL) (at protein level). Expressed in all tissues tested.

It is found in the cell membrane. It localises to the cell projection. The protein resides in the cilium. Functionally, acts as a GTPase-activating protein (GAP) involved in trafficking between the Golgi and the ciliary membrane. Acts as a GTPase-activating protein (GAP) for tubulin in concert with tubulin-specific chaperone C, but does not enhance tubulin heterodimerization. In the retina, required for maintenance of rod and cone photoreceptor cells. May have a role in normal retinal localization of the transducins GNB1 and GNAT1, and the rhodopsin kinase GRK1. The chain is Protein XRP2 from Danio rerio (Zebrafish).